An 821-amino-acid chain; its full sequence is DNA ligase (821 aa).

Residues 50–54 (DAEYD), 99–100 (SL), and Glu140 contribute to the NAD(+) site. The active-site N6-AMP-lysine intermediate is the Lys142. NAD(+) is bound by residues Arg163, Glu200, Lys319, and Lys343. 4 residues coordinate Zn(2+): Cys452, Cys455, Cys470, and Cys476. A BRCT domain is found at 742 to 821 (AAALPLEGKT…AGLQALLAGN (80 aa)).

It belongs to the NAD-dependent DNA ligase family. LigA subfamily. Mg(2+) serves as cofactor. It depends on Mn(2+) as a cofactor.

It catalyses the reaction NAD(+) + (deoxyribonucleotide)n-3'-hydroxyl + 5'-phospho-(deoxyribonucleotide)m = (deoxyribonucleotide)n+m + AMP + beta-nicotinamide D-nucleotide.. In terms of biological role, DNA ligase that catalyzes the formation of phosphodiester linkages between 5'-phosphoryl and 3'-hydroxyl groups in double-stranded DNA using NAD as a coenzyme and as the energy source for the reaction. It is essential for DNA replication and repair of damaged DNA. The sequence is that of DNA ligase from Chromobacterium violaceum (strain ATCC 12472 / DSM 30191 / JCM 1249 / CCUG 213 / NBRC 12614 / NCIMB 9131 / NCTC 9757 / MK).